A 501-amino-acid polypeptide reads, in one-letter code: UDP-N-acetylmuramoyl-L-alanyl-D-glutamate--2,6-diaminopimelate ligase (501 aa).

UDP-N-acetyl-alpha-D-muramoyl-L-alanyl-D-glutamate-binding positions include Leu-26, Ser-28, and 43-45; that span reads HQC. 123 to 129 contacts ATP; it reads GTNGKTT. UDP-N-acetyl-alpha-D-muramoyl-L-alanyl-D-glutamate contacts are provided by residues Asn-164, 165–166, Ser-192, Gln-198, and Arg-200; that span reads TT. Lys-232 bears the N6-carboxylysine mark. Meso-2,6-diaminopimelate-binding positions include Arg-398, 422–425, Gly-473, and Glu-477; that span reads DNPR. The Meso-diaminopimelate recognition motif motif lies at 422-425; it reads DNPR.

This sequence belongs to the MurCDEF family. MurE subfamily. Requires Mg(2+) as cofactor. Carboxylation is probably crucial for Mg(2+) binding and, consequently, for the gamma-phosphate positioning of ATP.

It is found in the cytoplasm. The catalysed reaction is UDP-N-acetyl-alpha-D-muramoyl-L-alanyl-D-glutamate + meso-2,6-diaminopimelate + ATP = UDP-N-acetyl-alpha-D-muramoyl-L-alanyl-gamma-D-glutamyl-meso-2,6-diaminopimelate + ADP + phosphate + H(+). The protein operates within cell wall biogenesis; peptidoglycan biosynthesis. Functionally, catalyzes the addition of meso-diaminopimelic acid to the nucleotide precursor UDP-N-acetylmuramoyl-L-alanyl-D-glutamate (UMAG) in the biosynthesis of bacterial cell-wall peptidoglycan. The polypeptide is UDP-N-acetylmuramoyl-L-alanyl-D-glutamate--2,6-diaminopimelate ligase (Haemophilus ducreyi (strain 35000HP / ATCC 700724)).